The sequence spans 68 residues: DNA-directed RNA polymerase subunit omega (68 aa).

It belongs to the RNA polymerase subunit omega family. The RNAP catalytic core consists of 2 alpha, 1 beta, 1 beta' and 1 omega subunit. When a sigma factor is associated with the core the holoenzyme is formed, which can initiate transcription.

The enzyme catalyses RNA(n) + a ribonucleoside 5'-triphosphate = RNA(n+1) + diphosphate. Functionally, promotes RNA polymerase assembly. Latches the N- and C-terminal regions of the beta' subunit thereby facilitating its interaction with the beta and alpha subunits. This chain is DNA-directed RNA polymerase subunit omega, found in Nitrosospira multiformis (strain ATCC 25196 / NCIMB 11849 / C 71).